The sequence spans 624 residues: DNA mismatch repair protein MutL (624 aa).

The protein belongs to the DNA mismatch repair MutL/HexB family.

Its function is as follows. This protein is involved in the repair of mismatches in DNA. It is required for dam-dependent methyl-directed DNA mismatch repair. May act as a 'molecular matchmaker', a protein that promotes the formation of a stable complex between two or more DNA-binding proteins in an ATP-dependent manner without itself being part of a final effector complex. This is DNA mismatch repair protein MutL from Chlorobium phaeobacteroides (strain DSM 266 / SMG 266 / 2430).